A 123-amino-acid polypeptide reads, in one-letter code: Integration host factor subunit alpha (123 aa).

Residues 97–123 (NANGTASSMSSSANAAAGDKSESASGT) are disordered. Residues 102–113 (ASSMSSSANAAA) are compositionally biased toward low complexity.

Belongs to the bacterial histone-like protein family. As to quaternary structure, heterodimer of an alpha and a beta chain.

Functionally, this protein is one of the two subunits of integration host factor, a specific DNA-binding protein that functions in genetic recombination as well as in transcriptional and translational control. The polypeptide is Integration host factor subunit alpha (Rhodopseudomonas palustris (strain HaA2)).